Reading from the N-terminus, the 65-residue chain is Large ribosomal subunit protein bL35 (65 aa).

Residues 1–65 (MPKIKTNRAA…GRLDRMLPYL (65 aa)) form a disordered region. Residues 10 to 44 (AAKRFRKTASGKYKAGHANRSHILTKKATKRKRNL) show a composition bias toward basic residues. A compositionally biased stretch (basic and acidic residues) spans 50–65 (VRAEDAGRLDRMLPYL).

The protein belongs to the bacterial ribosomal protein bL35 family.

The polypeptide is Large ribosomal subunit protein bL35 (Xylella fastidiosa (strain M23)).